Consider the following 92-residue polypeptide: Small ribosomal subunit protein uS19 (92 aa).

It belongs to the universal ribosomal protein uS19 family.

Its function is as follows. Protein S19 forms a complex with S13 that binds strongly to the 16S ribosomal RNA. This chain is Small ribosomal subunit protein uS19, found in Borrelia recurrentis (strain A1).